A 346-amino-acid chain; its full sequence is Porin Omp2a (346 aa).

The signal sequence occupies residues 1–22 (MNIKSLLLGSAAALVAASGAQA).

Belongs to the alphaproteobacteria porin family. In terms of assembly, monomer.

It is found in the cell outer membrane. In terms of biological role, forms passive diffusion pores that allow small molecular weight hydrophilic materials across the outer membrane. This is Porin Omp2a (omp2a) from Brucella ovis.